The sequence spans 367 residues: Peptide chain release factor 2 (367 aa).

Residue Gln-254 is modified to N5-methylglutamine.

It belongs to the prokaryotic/mitochondrial release factor family. Post-translationally, methylated by PrmC. Methylation increases the termination efficiency of RF2.

It localises to the cytoplasm. In terms of biological role, peptide chain release factor 2 directs the termination of translation in response to the peptide chain termination codons UGA and UAA. This is Peptide chain release factor 2 from Acidovorax ebreus (strain TPSY) (Diaphorobacter sp. (strain TPSY)).